We begin with the raw amino-acid sequence, 410 residues long: Elongation factor Tu (410 aa).

Residues 10–219 (KTHVNVGTIG…ALDTYIPDPV (210 aa)) enclose the tr-type G domain. GTP is bound by residues 19 to 26 (GHVDHGKT), 88 to 92 (DCPGH), and 143 to 146 (NKCD). Threonine 26 serves as a coordination point for Mg(2+).

It belongs to the TRAFAC class translation factor GTPase superfamily. Classic translation factor GTPase family. EF-Tu/EF-1A subfamily. In terms of assembly, monomer.

The protein localises to the cytoplasm. The enzyme catalyses GTP + H2O = GDP + phosphate + H(+). Functionally, GTP hydrolase that promotes the GTP-dependent binding of aminoacyl-tRNA to the A-site of ribosomes during protein biosynthesis. In Brachyspira hyodysenteriae (Treponema hyodysenteriae), this protein is Elongation factor Tu.